A 312-amino-acid polypeptide reads, in one-letter code: ADP-L-glycero-D-manno-heptose-6-epimerase (312 aa).

NADP(+) is bound by residues 10–11 (FI), 31–32 (DN), Lys-38, Lys-53, 75–79 (EGACS), and Asn-92. Tyr-140 acts as the Proton acceptor in catalysis. Residue Lys-144 participates in NADP(+) binding. Asn-169 is a binding site for substrate. Positions 170 and 178 each coordinate NADP(+). Residue Lys-178 is the Proton acceptor of the active site. Substrate contacts are provided by residues Ser-180, His-187, 201 to 204 (FAGS), Arg-209, and Tyr-274.

It belongs to the NAD(P)-dependent epimerase/dehydratase family. HldD subfamily. As to quaternary structure, homopentamer. It depends on NADP(+) as a cofactor.

It catalyses the reaction ADP-D-glycero-beta-D-manno-heptose = ADP-L-glycero-beta-D-manno-heptose. The protein operates within nucleotide-sugar biosynthesis; ADP-L-glycero-beta-D-manno-heptose biosynthesis; ADP-L-glycero-beta-D-manno-heptose from D-glycero-beta-D-manno-heptose 7-phosphate: step 4/4. Its pathway is bacterial outer membrane biogenesis; LPS core biosynthesis. Its function is as follows. Catalyzes the interconversion between ADP-D-glycero-beta-D-manno-heptose and ADP-L-glycero-beta-D-manno-heptose via an epimerization at carbon 6 of the heptose. The protein is ADP-L-glycero-D-manno-heptose-6-epimerase of Photorhabdus laumondii subsp. laumondii (strain DSM 15139 / CIP 105565 / TT01) (Photorhabdus luminescens subsp. laumondii).